Reading from the N-terminus, the 387-residue chain is Peptostreptococcal albumin-binding protein (387 aa).

An N-terminal signal peptide occupies residues 1-26; that stretch reads MKLNKKLLMAALAGAIVVGGGVNTFA. A disordered region spans residues 122–155; sequence LFDKHELGGLGKDKGPGRFDENGWENNEHGYETR. The tract at residues 213-265 is GA module; that stretch reads TIDQWLLKNAKEDAIAELKKAGITSDFYFNAINKAKTVEEVNALKNEILKAHA. A disordered region spans residues 266 to 360; sequence GKEVNPSTPE…EKAALPEAGR (95 aa). Polar residues predominate over residues 270 to 282; that stretch reads NPSTPEVTPSVPQ. Residues 298–360 are compositionally biased toward basic and acidic residues; that stretch reads GTKEDGKKEN…EKAALPEAGR (63 aa). Residues 355-359 carry the LPXTG sorting signal motif; sequence LPEAG. The residue at position 358 (A358) is a Pentaglycyl murein peptidoglycan amidated alanine. Residues 359–387 constitute a propeptide, removed by sortase; the sequence is GRRKAEILTLAAASLSSVAGAFISLKKRK.

It is found in the secreted. It localises to the cell wall. Functionally, binds serum albumin. The chain is Peptostreptococcal albumin-binding protein (pab) from Finegoldia magna (Peptostreptococcus magnus).